The chain runs to 1203 residues: DNA-directed RNA polymerase subunit beta' (1203 aa).

C60, C62, C75, and C78 together coordinate Zn(2+). Residues D449, D451, and D453 each contribute to the Mg(2+) site. Zn(2+) contacts are provided by C818, C892, C899, and C902. Positions R1180–V1203 are disordered. Positions E1190–V1203 are enriched in acidic residues.

This sequence belongs to the RNA polymerase beta' chain family. The RNAP catalytic core consists of 2 alpha, 1 beta, 1 beta' and 1 omega subunit. When a sigma factor is associated with the core the holoenzyme is formed, which can initiate transcription. Mg(2+) is required as a cofactor. The cofactor is Zn(2+).

The catalysed reaction is RNA(n) + a ribonucleoside 5'-triphosphate = RNA(n+1) + diphosphate. Functionally, DNA-dependent RNA polymerase catalyzes the transcription of DNA into RNA using the four ribonucleoside triphosphates as substrates. This is DNA-directed RNA polymerase subunit beta' from Oceanobacillus iheyensis (strain DSM 14371 / CIP 107618 / JCM 11309 / KCTC 3954 / HTE831).